Reading from the N-terminus, the 250-residue chain is Triosephosphate isomerase (250 aa).

N9–K11 contacts substrate. H94 acts as the Electrophile in catalysis. The active-site Proton acceptor is the E166. Residues G172, S211, and G232–G233 each bind substrate.

It belongs to the triosephosphate isomerase family. In terms of assembly, homodimer.

It is found in the cytoplasm. The catalysed reaction is D-glyceraldehyde 3-phosphate = dihydroxyacetone phosphate. Its pathway is carbohydrate biosynthesis; gluconeogenesis. It functions in the pathway carbohydrate degradation; glycolysis; D-glyceraldehyde 3-phosphate from glycerone phosphate: step 1/1. Involved in the gluconeogenesis. Catalyzes stereospecifically the conversion of dihydroxyacetone phosphate (DHAP) to D-glyceraldehyde-3-phosphate (G3P). The polypeptide is Triosephosphate isomerase (Methylococcus capsulatus (strain ATCC 33009 / NCIMB 11132 / Bath)).